The primary structure comprises 45 residues: Large ribosomal subunit protein bL34 (45 aa).

The segment at 23 to 45 (ETPGGKKVLSARRAKGRKNLIAK) is disordered. Basic residues predominate over residues 31–45 (LSARRAKGRKNLIAK).

The protein belongs to the bacterial ribosomal protein bL34 family.

In Elusimicrobium minutum (strain Pei191), this protein is Large ribosomal subunit protein bL34.